Reading from the N-terminus, the 393-residue chain is S-adenosylmethionine synthase 2 (393 aa).

Mg(2+) is bound at residue glutamate 9. Residue histidine 15 participates in ATP binding. Glutamate 43 contacts K(+). Positions 56 and 99 each coordinate L-methionine. ATP contacts are provided by residues 167-169, 235-238, aspartate 246, 252-253, alanine 269, lysine 273, and lysine 277; these read DGK, SGRF, and RK. Aspartate 246 contributes to the L-methionine binding site. Lysine 277 is a binding site for L-methionine.

It belongs to the AdoMet synthase family. As to quaternary structure, homotetramer. Mn(2+) is required as a cofactor. The cofactor is Mg(2+). It depends on Co(2+) as a cofactor. K(+) serves as cofactor.

Its subcellular location is the cytoplasm. It catalyses the reaction L-methionine + ATP + H2O = S-adenosyl-L-methionine + phosphate + diphosphate. It participates in amino-acid biosynthesis; S-adenosyl-L-methionine biosynthesis; S-adenosyl-L-methionine from L-methionine: step 1/1. Catalyzes the formation of S-adenosylmethionine from methionine and ATP. The reaction comprises two steps that are both catalyzed by the same enzyme: formation of S-adenosylmethionine (AdoMet) and triphosphate, and subsequent hydrolysis of the triphosphate. The polypeptide is S-adenosylmethionine synthase 2 (SAMS2) (Elaeagnus umbellata (Autumn olive)).